Consider the following 541-residue polypeptide: MPGLRRDRLLALLLLGALFSADLYFHLWPQVQRQLRPGERPAACPCSGRAPSASLHSAAASRDLGTASHNFSGALPRVEHPSRGHPAPRSKLQALFAHSLYQVLEDPPLLGPEDWLLASQEALRYYRRKVARWNRRHKIYKEQFNLTSLDPPLQFRPEASWVQFHLGINSHGLYSRSSLAISKLLHDMRHFPTISADYSQDEKALLGACDCSQIVKPSGVHLKLVLRFSDFGKAMFKPMRQQREEETPEDFFYFIDFQRHNAEIAAFHLDRILDFRRVPPTVGRLVNVTKEILEVTKNEILQSVFFVSPANNVCFFAKCPYMCKTEYAVCGNPHLLEGSLSAFLPSLNLAPRLSVPNPWIRSYSLSGKEEWELNPLYCDTVKQIYPYNSSNRLLGIIDMAVFDFLIGNMDRHHYEMFTKFGDDGYLIHLDNARGFGRHSQDEISILAPLAQCCMIKRKTLLHLQLLAQADYRLSDVMRESLLEDQLSPVLTEPHLLALDRRLQIILKTVEDCIEAHGERRVIAEGSAQRSAPDSGQANLTS.

An N-terminal signal peptide occupies residues 1–33; the sequence is MPGLRRDRLLALLLLGALFSADLYFHLWPQVQR. Residues Asn-70, Asn-145, and Asn-287 are each glycosylated (N-linked (GlcNAc...) asparagine). 4 cysteine pairs are disulfide-bonded: Cys-314–Cys-330, Cys-319–Cys-323, Cys-378–Cys-452, and Cys-453–Cys-512. N-linked (GlcNAc...) asparagine glycosylation occurs at Asn-388. An N-linked (GlcNAc...) asparagine glycan is attached at Asn-538.

This sequence belongs to the FAM20 family. Interacts with FAM20C; probably forming a heterotetramer of 2 subunits of FAM20A and 2 subunits of FAM20C. N-glycosylated. As to expression, in the mammary gland, expressed at higher levels in lactating mice than in virgin mice. Observed throughout the tissues of the mandibular incisor, including the secretory and maturation stage ameloblasts, the suprabasal layers of the gingival epithelium and the odontoblasts. Weak expression in the enamel matrix.

The protein localises to the secreted. The protein resides in the golgi apparatus. Its subcellular location is the endoplasmic reticulum. Pseudokinase that acts as an allosteric activator of the Golgi serine/threonine protein kinase FAM20C and is involved in biomineralization of teeth. Forms a complex with FAM20C and increases the ability of FAM20C to phosphorylate the proteins that form the 'matrix' that guides the deposition of the enamel minerals. This chain is Pseudokinase FAM20A, found in Mus musculus (Mouse).